A 236-amino-acid chain; its full sequence is Mediator of RNA polymerase II transcription subunit 20 (236 aa).

This sequence belongs to the Mediator complex subunit 20 family. In terms of assembly, component of the Mediator complex.

The protein resides in the nucleus. In terms of biological role, component of the Mediator complex, a coactivator involved in the regulated transcription of nearly all RNA polymerase II-dependent genes. Mediator functions as a bridge to convey information from gene-specific regulatory proteins to the basal RNA polymerase II transcription machinery. Mediator is recruited to promoters by direct interactions with regulatory proteins and serves as a scaffold for the assembly of a functional preinitiation complex with RNA polymerase II and the general transcription factors. This chain is Mediator of RNA polymerase II transcription subunit 20 (SRB2), found in Debaryomyces hansenii (strain ATCC 36239 / CBS 767 / BCRC 21394 / JCM 1990 / NBRC 0083 / IGC 2968) (Yeast).